The chain runs to 979 residues: Translation initiation factor IF-2 (979 aa).

Over residues 50-77 (LKRSHGQSDDSARKKITLTKRETSEIRQ) the composition is skewed to basic and acidic residues. Positions 50–385 (LKRSHGQSDD…GKHNADDARS (336 aa)) are disordered. Over residues 78-87 (SDSTGKTRTV) the composition is skewed to polar residues. Basic and acidic residues-rich tracts occupy residues 98–109 (IKRDDVESHGDG), 121–142 (EEVR…RQEA), and 149–173 (EAAE…RRQA). Low complexity predominate over residues 174 to 192 (ELLAQKAAEEAAAAQAAAD). 3 stretches are compositionally biased toward basic and acidic residues: residues 196–211 (ETAR…RLAT), 219–263 (NADD…EAEA), and 280–291 (PSERKAEEKKAE). Over residues 317-327 (APAATTTTAAA) the composition is skewed to low complexity. A compositionally biased stretch (gly residues) spans 351-368 (GGGLKTRGDSSGGVGGWR). The region spanning 479 to 646 (PRPPVVTVMG…NVLLQAEVLE (168 aa)) is the tr-type G domain. A G1 region spans residues 488–495 (GHVDHGKT). 488-495 (GHVDHGKT) serves as a coordination point for GTP. A G2 region spans residues 513–517 (GITQH). A G3 region spans residues 534–537 (DTPG). Residues 534–538 (DTPGH) and 588–591 (TKVD) each bind GTP. The tract at residues 588-591 (TKVD) is G4. Residues 624-626 (SAK) form a G5 region.

The protein belongs to the TRAFAC class translation factor GTPase superfamily. Classic translation factor GTPase family. IF-2 subfamily.

The protein localises to the cytoplasm. Functionally, one of the essential components for the initiation of protein synthesis. Protects formylmethionyl-tRNA from spontaneous hydrolysis and promotes its binding to the 30S ribosomal subunits. Also involved in the hydrolysis of GTP during the formation of the 70S ribosomal complex. In Cupriavidus metallidurans (strain ATCC 43123 / DSM 2839 / NBRC 102507 / CH34) (Ralstonia metallidurans), this protein is Translation initiation factor IF-2.